A 137-amino-acid polypeptide reads, in one-letter code: Small ribosomal subunit protein uS12 (137 aa).

2 disordered regions span residues 1–21 (MPTI…KSKS) and 33–57 (KVQT…TPRK). A 3-methylthioaspartic acid modification is found at Asp-102.

Belongs to the universal ribosomal protein uS12 family. In terms of assembly, part of the 30S ribosomal subunit. Contacts proteins S8 and S17. May interact with IF1 in the 30S initiation complex.

Functionally, with S4 and S5 plays an important role in translational accuracy. Interacts with and stabilizes bases of the 16S rRNA that are involved in tRNA selection in the A site and with the mRNA backbone. Located at the interface of the 30S and 50S subunits, it traverses the body of the 30S subunit contacting proteins on the other side and probably holding the rRNA structure together. The combined cluster of proteins S8, S12 and S17 appears to hold together the shoulder and platform of the 30S subunit. The protein is Small ribosomal subunit protein uS12 of Streptococcus pneumoniae (strain ATCC 700669 / Spain 23F-1).